The chain runs to 555 residues: MTDTTADQTRHGDRPYDVVIIGSGLSGTMLGSILAKHGFRIMLLDGAHHPRFAVGESTIGQTLVVLRLISDRYGVPEIANLASFQDVLANVSSSHGQKSNFGFMFHRDGEEPDPNETSQFRIPSIVGNAAHFFRQDTDSYMFHAAVRYGCDARQYYRVENIEFDDGGVTVSGADGSTVRARYLVDASGFRSPLARQLGLREEPSRLKHHARSIFTHMVGVDAIDDHVDTPAELRPPVPWNDGTMHHIFERGWMWIIPFNNHPGATNPLCSVGIQLDERRYPARPDLTPEEEFWSHVDRFPAVQRQLKGARSVREWVRTDRMQYSSSRTVGERWCLMSHAAGFIDPLFSRGLSNTCEIINALSWRLMAALREDDFAVERFAYVEELEQGLLDWNDKLVNNSFISFSHYPLWNSVFRIWASASVIGGKRILNALTRTKETGDDSHCQALDDNPYPGLWCPLDFYKEAFDELTELCEAVDAGHTTAEEAARVLEQRVRESDWMLPALGFNDPDTHHINPTADKMIRIAEWATGHHRPEIRELLAASAEEVRAAMRVKP.

22 to 27 contacts FAD; it reads GSGLSG.

Belongs to the flavin-dependent halogenase family. Bacterial tryptophan halogenase subfamily. In terms of assembly, homodimer.

The catalysed reaction is tetracycline + FADH2 + chloride + O2 = 7-chlorotetracycline + FAD + 2 H2O + H(+). Its pathway is antibiotic biosynthesis. In terms of biological role, involved in the biosynthesis of chlorotetracycline (CTC), an important member from antibiotics tetracycline (TC) family, which inhibits protein synthesis in bacteria and is widely involved in clinical therapy, animal feeds and aquaculture. Utilizes FADH(2) supplied by the flavin reductase CtcQ, to catalyze the chlorination of tetracycline (TC) at C7 position, leading to the production of 7-chlorotetracycline. The enzyme forms a lysine chloramine intermediate on an internal lysine residue before transferring the chlorine to the substrate. It is stereo-selective for the 4S (natural) isomer of tetracycline. This chain is Tetracycline 7-halogenase, found in Kitasatospora aureofaciens (Streptomyces aureofaciens).